A 634-amino-acid chain; its full sequence is Growth hormone receptor (634 aa).

Positions 1-18 (MDLWQLLLTLAVAGSSDA) are cleaved as a signal peptide. The Extracellular segment spans residues 19–260 (FSGSEATPAF…NPSACEEDFQ (242 aa)). An N-linked (GlcNAc...) asparagine glycan is attached at N46. A disulfide bond links C56 and C66. N73 carries N-linked (GlcNAc...) asparagine glycosylation. A disulfide bridge links C97 with C108. N-linked (GlcNAc...) asparagine glycosylation occurs at N111. Residues C122 and C136 are joined by a disulfide bond. Positions 147-250 (PPVGLNWTLL…EVLLITFPQM (104 aa)) constitute a Fibronectin type-III domain. N-linked (GlcNAc...) asparagine glycosylation is found at N152, N157, and N196. Positions 236–240 (YGKFS) match the WSXWS motif motif. A helical membrane pass occupies residues 261–284 (FPWFLIIMFGILGLAVTLFLLIFS). Topologically, residues 285-634 (KQQRIKMLIL…STDQLNKIMP (350 aa)) are cytoplasmic. The segment at 290–375 (KMLILPPVPV…HEKSLNIFGA (86 aa)) is required for JAK2 binding. Positions 293 to 301 (ILPPVPVPK) match the Box 1 motif motif. Positions 336-345 (DSWVEFIELD) match the UbE motif motif. At S337 the chain carries Phosphoserine. Y483 and Y591 each carry phosphotyrosine.

It belongs to the type I cytokine receptor family. Type 1 subfamily. On growth hormone (GH) binding, forms homodimers and binds JAK2 via a box 1-containing domain. In terms of processing, the soluble form (GHBP) is produced by phorbol ester-promoted proteolytic cleavage at the cell surface (shedding) by ADAM17/TACE. Shedding is inhibited by growth hormone (GH) binding to the receptor probably due to a conformational change in GHR rendering the receptor inaccessible to ADAM17. Post-translationally, on GH binding, phosphorylated on tyrosine residues in the cytoplasmic domain by JAK2. Ubiquitinated by the ECS(SOCS2) complex following ligand-binding and phosphorylation by JAK2, leading to its degradation by the proteasome. Regulation by the ECS(SOCS2) complex acts as a negative feedback loop of growth hormone receptor signaling. Ubiquitination is not sufficient for GHR internalization.

It is found in the cell membrane. It localises to the secreted. Functionally, receptor for pituitary gland growth hormone (GH1) involved in regulating postnatal body growth. On ligand binding, couples to the JAK2/STAT5 pathway. The soluble form (GHBP) acts as a reservoir of growth hormone in plasma and may be a modulator/inhibitor of GH signaling. The sequence is that of Growth hormone receptor (GHR) from Bos indicus (Zebu).